A 296-amino-acid polypeptide reads, in one-letter code: MRQIVLRGMGVALITPFKCDGTVDYPALSYLVDYQLQNGIDYLIVLGTTAETPTLSYEEQKEIVRLVVSIVRERIPIVVGVGGNNTQAVIHKLNTEDFGKIDAILSVVPYYNKPTQDGIYQHFKYIAQATSLPIILYNVPSRTGVNMTAETSLLLANDFENIVAIKEASGNIDQIGVIIENKPSGFQVLSGDDELSLSLIGIGAVGVISVIGNVFPKEFGKMIRLALNGDSDNARIIHGQFAELFELLFIEGNPAGVKGMLNVMGFIENKLRLPLVPVLEATYERIKKALLMFRTQ.

Threonine 49 is a binding site for pyruvate. Catalysis depends on tyrosine 137, which acts as the Proton donor/acceptor. The active-site Schiff-base intermediate with substrate is lysine 166. Isoleucine 208 contributes to the pyruvate binding site.

Belongs to the DapA family. Homotetramer; dimer of dimers.

The protein resides in the cytoplasm. The enzyme catalyses L-aspartate 4-semialdehyde + pyruvate = (2S,4S)-4-hydroxy-2,3,4,5-tetrahydrodipicolinate + H2O + H(+). Its pathway is amino-acid biosynthesis; L-lysine biosynthesis via DAP pathway; (S)-tetrahydrodipicolinate from L-aspartate: step 3/4. Its function is as follows. Catalyzes the condensation of (S)-aspartate-beta-semialdehyde [(S)-ASA] and pyruvate to 4-hydroxy-tetrahydrodipicolinate (HTPA). This chain is 4-hydroxy-tetrahydrodipicolinate synthase, found in Azobacteroides pseudotrichonymphae genomovar. CFP2.